Consider the following 148-residue polypeptide: Deoxyuridine 5'-triphosphate nucleotidohydrolase (148 aa).

Substrate-binding positions include Arg-67–Gly-69, Asn-80, Leu-84–Asp-86, and Met-94.

This sequence belongs to the dUTPase family. It depends on Mg(2+) as a cofactor.

The enzyme catalyses dUTP + H2O = dUMP + diphosphate + H(+). The protein operates within pyrimidine metabolism; dUMP biosynthesis; dUMP from dCTP (dUTP route): step 2/2. Functionally, this enzyme is involved in nucleotide metabolism: it produces dUMP, the immediate precursor of thymidine nucleotides and it decreases the intracellular concentration of dUTP so that uracil cannot be incorporated into DNA. The protein is Deoxyuridine 5'-triphosphate nucleotidohydrolase of Burkholderia mallei (strain NCTC 10247).